Consider the following 1030-residue polypeptide: MALSDIIQRRDWENPQSVNIHCLKAHSPLASYRDINHARDGIHAQRQSLNGQWKFKLFDAPEQVEGEFIDVQFNDSAWGDITVPSNWQLQGYDKPIYANVKYPFEVNPPYVPADNPTGCYRTRLTLTEADLESTQRIIFDGVNSAFHLWCNGDWVGYSQDSRLPAEFDLSQYLTAGENTLAVMVIRWSDGSYLEDQDMWWLSGIFRDVTLLSKPKQCIEDVFITPDLDACYRDGSLSIVTHISAPETSQVHVQLFDGSQAVTEPSIARPHNRRIDERGSYDDVVFQTLHVREPQQWTAETPNLYRVVVSLLDAEGNHLESEAYQVGFRKVEVKDGQLQLNGKPLLIRGVNRHEHHPELGHVMTEEDMVRDICLMKQYNFNAVRTAHYPNHPRWYELCDQYGLYVCDEANIETHGMIPMNRLSADPQWAHAYMSRYTQMVMRDKNHPSIIIWSLGNESGHGSSHNAMYAWSKQFDPSRPVQYEGGGANTTATDIICPMYARVNTTVEDEAVPKWPIKQWISLPNEQRPLILCEYAHAMGNSLGNFNEYWDAFREFPRLQGGFIWDWVDQGLSQWDNDGKHFWAYGGDFGDTINDRQFCINGLIFPDRTPHPTLEEVKFCQRMITVALTQQDKQQCHLTVTNEYVFRSTDNEQLHWSVLENGVEVQSGQCTLAIDAGSQQTVDIALDFQPKADAKYHLNTDICLISATPWAQAGHVSATEQFTLSNTSSLTLPKISILSAPQLSEQGRDILVSNLDKKHQWQWNVESGLLTSWMVDGQSQLLHAPEDNFFRAPLDNDIGVSEIDNIDPNAWVCRWDAAGIGRWERECVSCTSESLSQAVKVTSTFAYHHNGGVQAITVWTYTLDNQGEMHIDVDVTLADHLPPMPRIGLELALPLPSDNTTVTWQGLGPFENYPDRLAAARFGQHTQSLDAMHTPYIFPTDSGLRSGTQWLNVGNLECTGDFLFSVSRFSQQQLTEAKHTNELTLEDKIYLRIDHQHMGVGGDDSWSPSVHEEFQLTDNTYRFSIMLKPRHN.

Residues asparagine 99 and aspartate 197 each contribute to the substrate site. Residue aspartate 197 participates in Na(+) binding. Glutamate 411, histidine 413, and glutamate 456 together coordinate Mg(2+). Substrate-binding positions include glutamate 456 and glutamate 532–histidine 535. The active-site Proton donor is the glutamate 456. Catalysis depends on glutamate 532, which acts as the Nucleophile. Asparagine 592 is a Mg(2+) binding site. Residues phenylalanine 596 and asparagine 599 each coordinate Na(+). The substrate site is built by asparagine 599 and tryptophan 1004.

It belongs to the glycosyl hydrolase 2 family. In terms of assembly, homotetramer. It depends on Mg(2+) as a cofactor. Na(+) serves as cofactor.

It carries out the reaction Hydrolysis of terminal non-reducing beta-D-galactose residues in beta-D-galactosides.. The chain is Beta-galactosidase from Photobacterium profundum (strain SS9).